The primary structure comprises 221 residues: CASP-like protein 4C1 (221 aa).

The segment at 1 to 21 (MDSPESSDRGLNPMTPDHGGH) is disordered. Residues 1-54 (MDSPESSDRGLNPMTPDHGGHNGKVVHYFGQGVEGGPASPRKLGHGHLHPKANT) are Cytoplasmic-facing. A helical transmembrane segment spans residues 55–75 (ALLLLRLLTFAFSLASLVIMA). Residues 76–101 (TNSATTTATAGRHRTVNWVDFDTYRY) lie on the Extracellular side of the membrane. Residues 102-122 (VLAACAIVCLYSFAEIGLGLW) form a helical membrane-spanning segment. At 123 to 144 (YLLKGRMVMPESMAHWFDFGHD) the chain is on the cytoplasmic side. Residues 145 to 165 (QGFAYLIFSACSGATAVAHNL) form a helical membrane-spanning segment. Residues 166 to 189 (RERHILIHGMYGCDEANSFCMKAE) lie on the Extracellular side of the membrane. A helical transmembrane segment spans residues 190-210 (ISIGLAFGAFLFIALSSLLSG). Residues 211-221 (YRLVKWLILGP) are Cytoplasmic-facing.

The protein belongs to the Casparian strip membrane proteins (CASP) family. Homodimer and heterodimers.

The protein localises to the cell membrane. This chain is CASP-like protein 4C1, found in Pteridium aquilinum subsp. aquilinum (Bracken fern).